The following is a 94-amino-acid chain: Large ribosomal subunit protein bL27 (94 aa).

Residues 1–9 constitute a propeptide that is removed on maturation; the sequence is MLKLNLQFF.

It belongs to the bacterial ribosomal protein bL27 family. Post-translationally, the N-terminus is cleaved by ribosomal processing cysteine protease Prp.

The protein is Large ribosomal subunit protein bL27 of Staphylococcus haemolyticus (strain JCSC1435).